The chain runs to 124 residues: Small ribosomal subunit protein bS16 (124 aa).

The span at 84–110 (EKAERKNLKKGEPGKAAKERAEKRAAR) shows a compositional bias: basic and acidic residues. Residues 84–124 (EKAERKNLKKGEPGKAAKERAEKRAAREAAANAPAEEAASE) form a disordered region. Positions 111 to 124 (EAAANAPAEEAASE) are enriched in low complexity.

The protein belongs to the bacterial ribosomal protein bS16 family.

This Paracoccus denitrificans (strain Pd 1222) protein is Small ribosomal subunit protein bS16.